Reading from the N-terminus, the 99-residue chain is Large ribosomal subunit protein eL30 (99 aa).

This sequence belongs to the eukaryotic ribosomal protein eL30 family. Part of the 50S ribosomal subunit.

The protein is Large ribosomal subunit protein eL30 of Pyrococcus furiosus (strain ATCC 43587 / DSM 3638 / JCM 8422 / Vc1).